The primary structure comprises 262 residues: Trypsin theta (262 aa).

A signal peptide spans 1 to 19 (MHRLVVLLVCLAVGSACAG). Residues 20 to 34 (TVGVSNGDPFEREGR) constitute a propeptide, activation peptide. A Peptidase S1 domain is found at 35-260 (IVGGEDTTIG…LRKWILNASE (226 aa)). Cysteine 61 and cysteine 77 are oxidised to a cystine. Active-site charge relay system residues include histidine 76 and aspartate 121. 2 disulfides stabilise this stretch: cysteine 186/cysteine 203 and cysteine 212/cysteine 236. Serine 216 acts as the Charge relay system in catalysis.

This sequence belongs to the peptidase S1 family.

It localises to the secreted. Its subcellular location is the extracellular space. The catalysed reaction is Preferential cleavage: Arg-|-Xaa, Lys-|-Xaa.. The protein is Trypsin theta (thetaTry) of Drosophila melanogaster (Fruit fly).